The chain runs to 340 residues: Guanine nucleotide-binding protein G(I)/G(S)/G(T) subunit beta-1 (340 aa).

Serine 2 carries the post-translational modification N-acetylserine. Residue serine 2 is modified to Phosphoserine. WD repeat units follow at residues 46 to 94 (RTRR…HAIP), 95 to 140 (LRSS…RELA), 141 to 181 (GHTG…TTFT), 182 to 223 (GHTG…QTFT), 224 to 267 (GHES…YSHD), 268 to 309 (NIIC…GVLA), and 310 to 340 (GHDN…KIWN). Histidine 266 is modified (phosphohistidine).

Belongs to the WD repeat G protein beta family. G proteins are composed of 3 units, alpha, beta and gamma. The heterodimer formed by GNB1 and GNG2 interacts with ARHGEF5. The heterodimer formed by GNB1 and GNG2 interacts with GRK2. Forms a complex with GNAO1 and GNG3. Interacts with ARHGEF18 and RASD2. Forms complexes with TAS2R14 and G-proteins; these complexes play a role in the perception of bitterness. Component of the TAS2R14-GNAI1 complex, consisting of TAS2R14, GNAI1, GNB1 and GNG2. Component of the TAS2R14-GNAT3 complex, consisting of TAS2R14, GNAT3, GNB1 and GNG2. Component of the TAS2R14-GNAS2 complex, consisting of TAS2R14, GNAS2, GNB1 and GNG2. Post-translationally, phosphorylation at His-266 by NDKB contributes to G protein activation by increasing the high energetic phosphate transfer onto GDP.

Its function is as follows. Guanine nucleotide-binding proteins (G proteins) are involved as a modulator or transducer in various transmembrane signaling systems. The beta and gamma chains are required for the GTPase activity, for replacement of GDP by GTP, and for G protein-effector interaction. This Cricetulus griseus (Chinese hamster) protein is Guanine nucleotide-binding protein G(I)/G(S)/G(T) subunit beta-1 (GNB1).